The following is a 101-amino-acid chain: NAD(P)H-quinone oxidoreductase subunit 4L, chloroplastic (101 aa).

Transmembrane regions (helical) follow at residues 2-22, 32-52, and 61-81; these read MLEH…YGLI, MCLE…SDLF, and IFSI…PAIV.

This sequence belongs to the complex I subunit 4L family. NDH is composed of at least 16 different subunits, 5 of which are encoded in the nucleus.

Its subcellular location is the plastid. It is found in the chloroplast thylakoid membrane. It carries out the reaction a plastoquinone + NADH + (n+1) H(+)(in) = a plastoquinol + NAD(+) + n H(+)(out). The catalysed reaction is a plastoquinone + NADPH + (n+1) H(+)(in) = a plastoquinol + NADP(+) + n H(+)(out). Its function is as follows. NDH shuttles electrons from NAD(P)H:plastoquinone, via FMN and iron-sulfur (Fe-S) centers, to quinones in the photosynthetic chain and possibly in a chloroplast respiratory chain. The immediate electron acceptor for the enzyme in this species is believed to be plastoquinone. Couples the redox reaction to proton translocation, and thus conserves the redox energy in a proton gradient. This is NAD(P)H-quinone oxidoreductase subunit 4L, chloroplastic from Nymphaea alba (White water-lily).